We begin with the raw amino-acid sequence, 195 residues long: dTTP/UTP pyrophosphatase (195 aa).

The active-site Proton acceptor is Asp77.

The protein belongs to the Maf family. YhdE subfamily. The cofactor is a divalent metal cation.

The protein localises to the cytoplasm. It carries out the reaction dTTP + H2O = dTMP + diphosphate + H(+). It catalyses the reaction UTP + H2O = UMP + diphosphate + H(+). Its function is as follows. Nucleoside triphosphate pyrophosphatase that hydrolyzes dTTP and UTP. May have a dual role in cell division arrest and in preventing the incorporation of modified nucleotides into cellular nucleic acids. The polypeptide is dTTP/UTP pyrophosphatase (Flavobacterium psychrophilum (strain ATCC 49511 / DSM 21280 / CIP 103535 / JIP02/86)).